A 575-amino-acid polypeptide reads, in one-letter code: DNA mismatch repair protein MutL (575 aa).

It belongs to the DNA mismatch repair MutL/HexB family.

Functionally, this protein is involved in the repair of mismatches in DNA. It is required for dam-dependent methyl-directed DNA mismatch repair. May act as a 'molecular matchmaker', a protein that promotes the formation of a stable complex between two or more DNA-binding proteins in an ATP-dependent manner without itself being part of a final effector complex. This Coxiella burnetii (strain CbuG_Q212) (Coxiella burnetii (strain Q212)) protein is DNA mismatch repair protein MutL.